Reading from the N-terminus, the 429-residue chain is MGNHLPLLPAESEEEDEMEVEDQDSKEAKKPNIINFDTSLPTSHTYLGADMEEFHGRTLHDDDSCQVIPVLPQVMMILIPGQTLPLQLFHPQEVSMVRNLIQKDRTFAVLAYSNIQEREAQFGTTAEIYAYREEQDFGIEIVKVKAIGRQRFKVLELRTQSDGIQQAKVQILPECVLPSTMSAVQLESLNKCQIFPPKPVSREDQCSYKWWQKYQKRKFHCANLTSWPRWLYSLYDAETLMDRIKKQLREWDENLKDDSLPSNPIDFSYRVAACLPIDDVLRIQLLKIGSAIQRLRCELDIMNKCTSLCCKQCQETEITTKNEIFSLSLCGPMAAYVNPHGYVHETLTVYKACNLNLIGRPSTEHSWFPGYAWTVAQCKICASHIGWKFTATKKDMSPQKFWGLTRSALLPTIPDTEDELSPDKVILCL.

A disordered region spans residues 1-30 (MGNHLPLLPAESEEEDEMEVEDQDSKEAKK). Positions 11-22 (ESEEEDEMEVED) are enriched in acidic residues. The residue at position 12 (S12) is a Phosphoserine. The Lon N-terminal domain maps to 68–306 (IPVLPQVMMI…CELDIMNKCT (239 aa)). Residues 305 to 413 (CTSLCCKQCQ…LTRSALLPTI (109 aa)) form the CULT domain. C310 and C313 together coordinate Zn(2+). Positions 365, 367, and 373 each coordinate (S)-thalidomide. Residues C378 and C381 each contribute to the Zn(2+) site.

It belongs to the CRBN family. As to quaternary structure, component of a DCX (DDB1-CUL4-X-box) protein ligase complex, at least composed of CRBN, CUL4A, DDB1 and RBX1. Interacts directly with DDB1. Interacts with KCNT1. Interacts with ILF2. Interacts with TRAF6 and ECSIT. Ubiquitinated, ubiquitination is mediated by its own DCX protein ligase complex.

It localises to the cytoplasm. The protein resides in the nucleus. The protein localises to the membrane. Its pathway is protein modification; protein ubiquitination. Substrate recognition component of a DCX (DDB1-CUL4-X-box) E3 protein ligase complex that mediates the ubiquitination and subsequent proteasomal degradation of target proteins, such as MEIS2, ILF2 or GLUL. Normal degradation of key regulatory proteins is required for normal limb outgrowth and expression of the fibroblast growth factor FGF8. Maintains presynaptic glutamate release and consequently cognitive functions, such as memory and learning, by negatively regulating large-conductance calcium-activated potassium (BK) channels in excitatory neurons. Likely to function by regulating the assembly and neuronal surface expression of BK channels via its interaction with KCNT1. May also be involved in regulating anxiety-like behaviors via a BK channel-independent mechanism. Plays a negative role in TLR4 signaling by interacting with TRAF6 and ECSIT, leading to inhibition of ECSIT ubiquitination, an important step of the signaling. The chain is Protein cereblon (CRBN) from Pongo abelii (Sumatran orangutan).